Reading from the N-terminus, the 209-residue chain is Ras-like protein (209 aa).

10 to 17 lines the GTP pocket; it reads GGGLVGKS. The Effector region signature appears at 55–63; that stretch reads YDPTVEDSR. Thr-58 is subject to Phosphothreonine. GTP is bound by residues 79–83 and 140–143; these read DTAGQ and NKAD. Position 206 is a cysteine methyl ester (Cys-206). Cys-206 is lipidated: S-geranylgeranyl cysteine. Residues 207-209 constitute a propeptide, removed in mature form; the sequence is LII.

The protein belongs to the small GTPase superfamily. Ras family. Post-translationally, phosphorylated in the presence of insulin.

It is found in the cell membrane. It catalyses the reaction GTP + H2O = GDP + phosphate + H(+). With respect to regulation, alternates between an inactive form bound to GDP and an active form bound to GTP. Activated by a guanine nucleotide-exchange factor (GEF) and inactivated by a GTPase-activating protein (GAP). This protein is activated by the insulin/insulin (insulin-like)-receptor system. This transition enables the ras protein to interact with the lectin-receptor/lectin complex, a process which ultimately lead to an initiation of an intra-cellular signal-transduction chain. This chain is Ras-like protein, found in Geodia cydonium (Sponge).